Here is a 5251-residue protein sequence, read N- to C-terminus: Dynein heavy chain-like protein 2 (5251 aa).

5 Kelch repeats span residues 37 to 87, 95 to 143, 266 to 317, 318 to 367, and 372 to 421; these read GLFL…CYHN, YVII…LQNG, SLIL…IHGN, NLFI…LVES, and IIFI…QNNE. The segment at 140–188 is disordered; the sequence is LQNGINGTNEKGYISQTDDENCSDNKYGENQDYGSNDSDSKDGEDIDKD. The interval 686–732 is disordered; the sequence is NNIEQRNNNNDNNDNNNNDNNNNNNNDNNNNNNNNNNNNNNNNDNLN. Residues 692–730 show a composition bias toward low complexity; that stretch reads NNNNDNNDNNNNDNNNNNNNDNNNNNNNNNNNNNNNNDN. Coiled coils occupy residues 1155 to 1225 and 1544 to 1610; these read DNII…KKIK and KLNN…KLIS. A disordered region spans residues 1554-1598; sequence EKNKNANENSNEIETNKYNKKEELTNNRDGDGDDDDNIKNDKDEK. Residues 1567 to 1583 are compositionally biased toward basic and acidic residues; the sequence is ETNKYNKKEELTNNRDG. The Kelch 6 repeat unit spans residues 1639–1685; sequence HIKYTLKYYITNLFRLKDLFNNEKEKWIDENYLAQVFILCNTIFFVN. The segment at 1802 to 1825 is disordered; that stretch reads HQEGKQEYNNKNNDNDNNNNNNNN. The segment covering 1810 to 1825 has biased composition (low complexity); it reads NNKNNDNDNNNNNNNN. ATP is bound at residue 1895–1902; it reads GPAGTGKT. Residues 2136 to 2188 adopt a coiled-coil conformation; that stretch reads NDINENKKEKDNIEELKSDNVKEEKKTKKKHLEDNNNNKKKELFNLNNIEKEL. A disordered region spans residues 2152–2171; sequence KSDNVKEEKKTKKKHLEDNN. 2224–2231 is a binding site for ATP; the sequence is GEAGCGKT. One copy of the Kelch 7 repeat lies at 2447–2494; it reads VIWCFGGFLGEKDNVNYKKSFDKYWKNTFKSIKVNRKISVFDFYVENN. Residues 2546–2553 and 2890–2897 each bind ATP; these read GKTGVGKT and GIGGCGKT. Low complexity-rich tracts occupy residues 3138–3154 and 3652–3671; these read DNNNNNNNNRDNIDGNN and DQNFINNNNNNNSSNNNSTN. 6 disordered regions span residues 3138-3163, 3652-3686, 4042-4250, 4280-4299, 4773-4824, and 4910-4948; these read DNNNNNNNNRDNIDGNNFFKNREGND, DQNFINNNNNNNSSNNNSTNFGYNEDPQKKDNHNN, EDND…EENV, NGKIDKDKEDDLEEEEDFEN, MDFH…ENEE, and KIIKKEKPGDNKDNKYTHDQKKETIHKEEDDEDEKHSGS. Over residues 4059 to 4086 the composition is skewed to acidic residues; it reads KMEDEEKMEEEKVDEEKMEEEKVDEEKM. The span at 4087-4247 shows a compositional bias: basic and acidic residues; sequence EDEKVEEKME…EKGEEQKAEE (161 aa). 2 stretches are compositionally biased toward acidic residues: residues 4289-4299 and 4807-4823; these read DDLEEEEDFEN and DDDDESNNSNDNEEENE. Basic and acidic residues predominate over residues 4912 to 4937; the sequence is IKKEKPGDNKDNKYTHDQKKETIHKE.

This sequence belongs to the dynein heavy chain family. In terms of assembly, consists of at least two heavy chains and a number of intermediate and light chains.

It localises to the cytoplasm. Its subcellular location is the cytoskeleton. Acts as a motor for the intracellular retrograde motility of vesicles and organelles along microtubules. Dynein has ATPase activity; the force-producing power stroke is thought to occur on release of ADP. The polypeptide is Dynein heavy chain-like protein 2 (Plasmodium falciparum (isolate 3D7)).